A 223-amino-acid chain; its full sequence is Large ribosomal subunit protein bL21 (223 aa).

The segment at 110–149 (TALKSTTAEPKAADAPKAKAKAAPKAEKAAAPKAEKAPAK) is disordered. Residues 133–147 (PKAEKAAAPKAEKAP) show a composition bias toward basic and acidic residues.

It belongs to the bacterial ribosomal protein bL21 family. In terms of assembly, part of the 50S ribosomal subunit. Contacts protein L20.

In terms of biological role, this protein binds to 23S rRNA in the presence of protein L20. The chain is Large ribosomal subunit protein bL21 from Maricaulis maris (strain MCS10) (Caulobacter maris).